The chain runs to 92 residues: Small ribosomal subunit protein uS19 (92 aa).

Belongs to the universal ribosomal protein uS19 family.

Protein S19 forms a complex with S13 that binds strongly to the 16S ribosomal RNA. The polypeptide is Small ribosomal subunit protein uS19 (Trichormus variabilis (strain ATCC 29413 / PCC 7937) (Anabaena variabilis)).